The following is a 73-amino-acid chain: Antitoxin VapB20 (73 aa).

Its function is as follows. Antitoxin component of a type II toxin-antitoxin (TA) system. Upon expression in E.coli neutralizes the toxic effect of cognate toxin VapC20. The polypeptide is Antitoxin VapB20 (vapB20) (Mycobacterium tuberculosis (strain ATCC 25618 / H37Rv)).